Consider the following 761-residue polypeptide: 5-methyltetrahydropteroyltriglutamate--homocysteine methyltransferase (761 aa).

5-methyltetrahydropteroyltri-L-glutamate is bound by residues 16–19 (RELK) and K116. Residues 435 to 437 (IGS) and E488 contribute to the L-homocysteine site. L-methionine is bound by residues 435 to 437 (IGS) and E488. Residues 519 to 520 (RC) and W565 contribute to the 5-methyltetrahydropteroyltri-L-glutamate site. D603 lines the L-homocysteine pocket. An L-methionine-binding site is contributed by D603. E609 serves as a coordination point for 5-methyltetrahydropteroyltri-L-glutamate. Residues H645, C647, and E669 each contribute to the Zn(2+) site. H698 functions as the Proton donor in the catalytic mechanism. Residue C730 participates in Zn(2+) binding.

This sequence belongs to the vitamin-B12 independent methionine synthase family. It depends on Zn(2+) as a cofactor.

It carries out the reaction 5-methyltetrahydropteroyltri-L-glutamate + L-homocysteine = tetrahydropteroyltri-L-glutamate + L-methionine. It participates in amino-acid biosynthesis; L-methionine biosynthesis via de novo pathway; L-methionine from L-homocysteine (MetE route): step 1/1. In terms of biological role, catalyzes the transfer of a methyl group from 5-methyltetrahydrofolate to homocysteine resulting in methionine formation. This chain is 5-methyltetrahydropteroyltriglutamate--homocysteine methyltransferase, found in Hahella chejuensis (strain KCTC 2396).